The sequence spans 35 residues: Tamulustoxin-2 (35 aa).

Cystine bridges form between Cys-2-Cys-22, Cys-7-Cys-31, and Cys-11-Cys-33.

The protein belongs to the short scorpion toxin superfamily. Potassium channel inhibitor family. In terms of tissue distribution, expressed by the venom gland.

The protein localises to the secreted. Blocks Kv1.6/KCNA6 potassium channels. The chain is Tamulustoxin-2 from Hottentotta tamulus (Eastern Indian scorpion).